Here is a 454-residue protein sequence, read N- to C-terminus: Cell division cycle-associated 7-like protein (454 aa).

The short motif at 9–33 (IPKEVADIFNAPSDDEEFVGFRDDV) is the Integrase domain-binding motif 1 (IBM1) element. Phosphoserine is present on serine 21. Positions 65 to 91 (FTEELRRIFIEDTDSETEDFAGFTQSD) match the Integrase domain-binding motif 2 (IBM2) motif. Residue threonine 77 is modified to Phosphothreonine. The residue at position 79 (serine 79) is a Phosphoserine. A phosphothreonine mark is found at threonine 81 and threonine 88. 2 disordered regions span residues 103–169 (VESD…LFSS) and 188–213 (QVIQREDSTSESEDDSRDESQESSDA). A phosphoserine mark is found at serine 105, serine 108, serine 117, serine 138, serine 139, serine 162, serine 195, and serine 197. The segment covering 117–126 (SEEEEDEEED) has biased composition (acidic residues). An MYC-binding region spans residues 213 to 235 (ALLKRTMNIKENKAMLAQLLAEL). Glycyl lysine isopeptide (Lys-Gly) (interchain with G-Cter in SUMO2) cross-links involve residues lysine 222 and lysine 225. Phosphoserine is present on serine 261.

As to quaternary structure, interacts with MYC. Interacts (via IBM motifs) with PSIP1 (via IBD domain); phosphorylation increases its affinity for PSIP1. In terms of processing, phosphorylation increases its interaction with PSIP1. As to expression, ubiquitous. Overexpressed in medulloblastoma.

The protein resides in the cytoplasm. It localises to the nucleus. In terms of biological role, plays a role in transcriptional regulation as a repressor that inhibits monoamine oxidase A (MAOA) activity and gene expression by binding to the promoter. Plays an important oncogenic role in mediating the full transforming effect of MYC in medulloblastoma cells. Involved in apoptotic signaling pathways; May act downstream of P38-kinase and BCL-2, but upstream of CASP3/caspase-3 as well as CCND1/cyclin D1 and E2F1. The polypeptide is Cell division cycle-associated 7-like protein (CDCA7L) (Homo sapiens (Human)).